A 362-amino-acid polypeptide reads, in one-letter code: Peptide chain release factor 1 (362 aa).

An N5-methylglutamine modification is found at Q235.

This sequence belongs to the prokaryotic/mitochondrial release factor family. Methylated by PrmC. Methylation increases the termination efficiency of RF1.

It localises to the cytoplasm. Its function is as follows. Peptide chain release factor 1 directs the termination of translation in response to the peptide chain termination codons UAG and UAA. This Acinetobacter baumannii (strain ACICU) protein is Peptide chain release factor 1.